The primary structure comprises 445 residues: UDP-N-acetylmuramate--L-alanine ligase (445 aa).

113–119 provides a ligand contact to ATP; it reads GSHGKTS.

It belongs to the MurCDEF family.

The protein localises to the cytoplasm. It catalyses the reaction UDP-N-acetyl-alpha-D-muramate + L-alanine + ATP = UDP-N-acetyl-alpha-D-muramoyl-L-alanine + ADP + phosphate + H(+). It participates in cell wall biogenesis; peptidoglycan biosynthesis. Its function is as follows. Cell wall formation. The sequence is that of UDP-N-acetylmuramate--L-alanine ligase from Enterococcus faecalis (strain ATCC 700802 / V583).